Consider the following 880-residue polypeptide: Alanine--tRNA ligase (880 aa).

Residues His-566, His-570, Cys-668, and His-672 each coordinate Zn(2+).

Belongs to the class-II aminoacyl-tRNA synthetase family. It depends on Zn(2+) as a cofactor.

It is found in the cytoplasm. The enzyme catalyses tRNA(Ala) + L-alanine + ATP = L-alanyl-tRNA(Ala) + AMP + diphosphate. Functionally, catalyzes the attachment of alanine to tRNA(Ala) in a two-step reaction: alanine is first activated by ATP to form Ala-AMP and then transferred to the acceptor end of tRNA(Ala). Also edits incorrectly charged Ser-tRNA(Ala) and Gly-tRNA(Ala) via its editing domain. The protein is Alanine--tRNA ligase of Nostoc punctiforme (strain ATCC 29133 / PCC 73102).